Here is a 257-residue protein sequence, read N- to C-terminus: ABC transporter ATP-binding protein YxdL (257 aa).

The 239-residue stretch at 5–243 folds into the ABC transporter domain; sequence LEVKHINKTY…FYEQILDVLS (239 aa). 40 to 47 is a binding site for ATP; it reads GPSGSGKT.

Belongs to the ABC transporter superfamily. In terms of assembly, the complex is composed of two ATP-binding proteins (YxdL) and two transmembrane proteins (YxdM).

Its function is as follows. Part of the ABC transporter complex YxdLM which could be involved in peptide resistance. Responsible for energy coupling to the transport system. The protein is ABC transporter ATP-binding protein YxdL (yxdL) of Bacillus subtilis (strain 168).